The sequence spans 1403 residues: Centrosomal protein of 162 kDa (1403 aa).

The tract at residues 20-46 (LSDDSFENSNKTPRQPNEDNKEMKKKD) is disordered. Over residues 35–46 (PNEDNKEMKKKD) the composition is skewed to basic and acidic residues. A phosphoserine mark is found at serine 160 and serine 163. Disordered stretches follow at residues 169–243 (LHRY…MLAN), 256–292 (VGLS…SSGD), 306–348 (SLGD…ESDL), and 453–606 (NPSL…GGNR). Residues 178–208 (PAEDGCENESEQEELPETYSDDFEDAEDADD) are compositionally biased toward acidic residues. Positions 210-238 (LITKDEETHPKENSESGKDSFPKQEEEKT) are enriched in basic and acidic residues. Positions 485–500 (PCKKARSTPSLPKRKP) are enriched in basic residues. Composition is skewed to basic and acidic residues over residues 526–536 (LEKKTSKDNTK) and 571–585 (PHRE…RPED). Residues 614 to 1124 (KRAQDAEEKW…QKERRMMLSR (511 aa)) adopt a coiled-coil conformation. The segment at 1126 to 1147 (IPRSREETAAKRLKKDPNRGHG) is disordered. Over residues 1128–1144 (RSREETAAKRLKKDPNR) the composition is skewed to basic and acidic residues. The stretch at 1174–1386 (EENYRLRSEL…LDVLRELHRQ (213 aa)) forms a coiled coil.

The protein belongs to the CEP162 family. In terms of assembly, interacts with CPNE4. Interacts with alpha-tubulin. Interacts with CEP290.

The protein resides in the cytoplasm. The protein localises to the cytoskeleton. It is found in the microtubule organizing center. Its subcellular location is the centrosome. It localises to the centriole. The protein resides in the spindle. The protein localises to the nucleus. In terms of biological role, required to promote assembly of the transition zone in primary cilia. Acts by specifically recognizing and binding the axonemal microtubule. Localizes to the distal ends of centrioles before ciliogenesis and directly binds to axonemal microtubule, thereby promoting and restricting transition zone formation specifically at the cilia base. Required to mediate CEP290 association with microtubules. This Mus musculus (Mouse) protein is Centrosomal protein of 162 kDa (Cep162).